The sequence spans 335 residues: Ig gamma-2A chain C region secreted form (335 aa).

Ig-like domains are found at residues 6–98 (PSVY…KKIE), 126–225 (PSVF…KTIS), and 234–330 (PQVY…KTIS). Residue Asn-185 is glycosylated (N-linked (GlcNAc...) asparagine).

Its subcellular location is the secreted. This chain is Ig gamma-2A chain C region secreted form, found in Mus musculus (Mouse).